Reading from the N-terminus, the 205-residue chain is MAMQKLFTYIYEFIEYRKMVLLEEKVPYDKFVQMVFNTGFFRINAETLNHGIVSVFIFGANGKYVHHGGDMRTLLTNTLNEKKQYEELILIVDKPILGKKNILDIIVEQRAANPTVVINIYPYHLFCINIPKVSAIPKHKLITQEEAQEFLGREYLQPQDLMQISASDPPVVWLGGRPGDFVQIERPSETAMHAVVIRFITKSKI.

Belongs to the archaeal RpoH/eukaryotic RPB5 RNA polymerase subunit family. Part of the viral DNA-directed RNA polymerase that consists of 8 polII-like subunits (RPB1, RPB2, RPB3, RPB5, RPB6, RPB7, RPB9, RPB10), a capping enzyme and a termination factor.

The protein resides in the host cytoplasm. Its subcellular location is the virion. Component of the DNA-directed RNA polymerase (RNAP) that catalyzes the transcription in the cytoplasm of viral DNA into RNA using the four ribonucleoside triphosphates as substrates. The protein is DNA-directed RNA polymerase RPB5 homolog of Ornithodoros (relapsing fever ticks).